A 116-amino-acid chain; its full sequence is Ino eighty subunit 4 (116 aa).

The segment covering 1–15 (MSQESSVLSESQEQL) has biased composition (low complexity). Disordered stretches follow at residues 1 to 40 (MSQESSVLSESQEQLANNPKIEDTSPPSANSRDNSKPVLP) and 70 to 116 (EERQ…GLDS). The span at 84–108 (KGSDDKATRKKEPADEDPEVKQLEK) shows a compositional bias: basic and acidic residues.

As to quaternary structure, component of the chromatin-remodeling INO80 complex, at least composed of ARP4, ARP5, ARP8, RVB1, RVB2, TAF14, NHP10, IES1, IES3, IES4, IES6, ACT1, IES2, IES5 and INO80.

It localises to the nucleus. The sequence is that of Ino eighty subunit 4 (IES4) from Saccharomyces cerevisiae (strain ATCC 204508 / S288c) (Baker's yeast).